Consider the following 137-residue polypeptide: Large ribosomal subunit protein uL16 (137 aa).

It belongs to the universal ribosomal protein uL16 family. In terms of assembly, part of the 50S ribosomal subunit.

Functionally, binds 23S rRNA and is also seen to make contacts with the A and possibly P site tRNAs. The protein is Large ribosomal subunit protein uL16 of Bartonella tribocorum (strain CIP 105476 / IBS 506).